Reading from the N-terminus, the 184-residue chain is Small ribosomal subunit protein bS16 (184 aa).

Residues 150–160 (KKAAEAAEKAA) show a composition bias toward basic and acidic residues. The segment at 150–184 (KKAAEAAEKAAAEAPAEEATEAPAEEAAATEAAAE) is disordered. The span at 164-173 (PAEEATEAPA) shows a compositional bias: acidic residues. The segment covering 174–184 (EEAAATEAAAE) has biased composition (low complexity).

This sequence belongs to the bacterial ribosomal protein bS16 family.

This is Small ribosomal subunit protein bS16 from Bacteroides thetaiotaomicron (strain ATCC 29148 / DSM 2079 / JCM 5827 / CCUG 10774 / NCTC 10582 / VPI-5482 / E50).